The sequence spans 514 residues: G-protein coupled receptor Mth (514 aa).

The first 24 residues, 1–24, serve as a signal peptide directing secretion; the sequence is MKTLLVLRISTVILVVLVIQKSYA. Over 25-218 the chain is Extracellular; it reads DILECDYFDT…CLIVPSITGQ (194 aa). 5 disulfides stabilise this stretch: Cys-29–Cys-83, Cys-85–Cys-90, Cys-94–Cys-188, Cys-95–Cys-106, and Cys-150–Cys-209. N-linked (GlcNAc...) asparagine glycosylation is present at Asn-45. 4 N-linked (GlcNAc...) asparagine glycosylation sites follow: Asn-109, Asn-123, Asn-170, and Asn-198. The chain crosses the membrane as a helical span at residues 219-239; sequence TVVMISSLICMVLTIAVYLFV. Residues 240–248 are Cytoplasmic-facing; that stretch reads KKLQNLHGK. Residues 249-269 traverse the membrane as a helical segment; sequence CFICYMVCLFMGYLFLLLDLW. The Extracellular segment spans residues 270 to 278; it reads QISISFCKP. Residues 279–299 traverse the membrane as a helical segment; that stretch reads AGFLGYFFVMAAFFWLSVISL. Residues 300-320 are Cytoplasmic-facing; the sequence is HLWNTFRGSSHKANRFLFEHR. The chain crosses the membrane as a helical span at residues 321-341; sequence FLAYNTYAWGMAVVLTGITVL. The Extracellular segment spans residues 342–370; it reads ADNIVENQDWNPRVGHEGHCWIYTQAWSA. Residues 371 to 391 traverse the membrane as a helical segment; sequence MLYFYGPMVFLIAFNITMFIL. Topologically, residues 392–424 are cytoplasmic; it reads TAKRILGVKKDIQNFAHRQERKQKLNSDKQTYT. The chain crosses the membrane as a helical span at residues 425-445; that stretch reads FFLRLFIIMGLSWSLEIGSYF. The Extracellular portion of the chain corresponds to 446 to 454; it reads SQSNQTWAN. Residue Asn-449 is glycosylated (N-linked (GlcNAc...) asparagine). Residues 455 to 475 form a helical membrane-spanning segment; that stretch reads VFLVADYLNWSQGIIIFILFV. Residues 476–514 lie on the Cytoplasmic side of the membrane; sequence LKRSTWRLLQESIRGEGEEVNNSEEEISLENTTTRNVLL.

This sequence belongs to the G-protein coupled receptor 2 family. Mth subfamily. As to quaternary structure, homodimer.

The protein resides in the cell membrane. Involved in biological aging and stress response. Essential for adult survival. Required in the presynaptic motor neuron to up-regulate neurotransmitter exocytosis at larval glutamatergic neuromuscular junctions (NMJs). Regulates a step associated with docking and clustering of vesicles at release sites. SP/Acp70A and sun are agonists that activate mth in vitro. The protein is G-protein coupled receptor Mth (mth) of Drosophila melanogaster (Fruit fly).